A 60-amino-acid chain; its full sequence is MDVRRAQEIASSPVMANVTYNGQRIYIEHVDQQKGVATIHPLDNPSQKQSVPVASLEEHS.

Residues 38–60 (TIHPLDNPSQKQSVPVASLEEHS) are disordered.

The protein belongs to the SspH family.

It is found in the spore core. The protein is Small, acid-soluble spore protein H 2 of Geobacillus thermodenitrificans (strain NG80-2).